Here is a 305-residue protein sequence, read N- to C-terminus: Ornithine carbamoyltransferase (305 aa).

Carbamoyl phosphate-binding positions include 53–56, Q80, R104, and 131–134; these read STRT and HPCQ. L-ornithine is bound by residues N162, D219, and 223 to 224; that span reads SM. Residues 259-260 and R287 each bind carbamoyl phosphate; that span reads CL.

The protein belongs to the aspartate/ornithine carbamoyltransferase superfamily. OTCase family.

It is found in the cytoplasm. It carries out the reaction carbamoyl phosphate + L-ornithine = L-citrulline + phosphate + H(+). Its pathway is amino-acid biosynthesis; L-arginine biosynthesis; L-arginine from L-ornithine and carbamoyl phosphate: step 1/3. In terms of biological role, reversibly catalyzes the transfer of the carbamoyl group from carbamoyl phosphate (CP) to the N(epsilon) atom of ornithine (ORN) to produce L-citrulline. This Psychrobacter cryohalolentis (strain ATCC BAA-1226 / DSM 17306 / VKM B-2378 / K5) protein is Ornithine carbamoyltransferase.